Consider the following 935-residue polypeptide: MNLGDGLKLETELLDGKTKLILSPYEHKSKVSVKMGNKFKIAKCPLRTKQTGHTLKSTQNTYIGNENLSQKKISTLDTSQAKPENSRLTFSPSTDKQYSEKDSVRVQKEISPTTSNIRKIINTTGTCPVAKQKPCKKNPTAETMNSGLVCLTQDQLRQILMLSVNQGNGSVCLTETGEEEASQDSLHLINIPSQPKDVNDTGFLQNTEAASPVTSEHEHVHRRAQEAFQQCEQKAATENEWKPADIFSTLGERERDKSLLEARRAQWKKELDEQVALKKKEKEASQKWHNPWKPSDIECEKSQVHDQSKEARLLESPCSAIKQEQQRKWIEELNKQVEDDQQRKAEERMIYSKGEEHDRWAVHFDSLKSHPGSQSRLSSQLTHQHLESLCVSPDTQELADVNGVFTPPPGVQAEPSEKEQRARPVLEMAVSHGPKTNFLRSMTALLDPAQIEERERRRQKQLEHQKAIMAQVEENRRKKRLEEEQRKKEEQELELRLAREREEMQRQYEEDILKQRQREEIMTLKTNELFHTMQRAQELAQRLKQEQRIRELAQKGHDTSRLIQNLGAQVDYKAFTTISSSHSDPEETADTSTASPKKDTGVQTDDVNLGIFNDALPPCGSVTEKGIRNISSPEISAEFSGQTDIRKENQELSMNKGTNLDKENSWHNGQCNQYRRTEKQTKLMKKCPKKPAWNINKPLKKYVPASAKYPAHLQKEKEEKKVQRQMELLHLVERNNPENLSQNRGISPLATSHRETESESRLHLIKKVEEPLKTPSVSKERFQTSPAVKNRTQQTQSNVLHLPLKNNDYEKETLTLGDGHTKLSDEMSEPSHFIPYVRTNEIYYLDPDAPLSRPSTQDNQYQKSHDCAREQELFDSDHIRDPLLNPKLVKNRDRQQAILKGLSELRQGLLQKQKELETNLIPLTANQEDNFSSSF.

Residues 76-96 are compositionally biased toward polar residues; that stretch reads LDTSQAKPENSRLTFSPSTDK. Positions 76 to 103 are disordered; sequence LDTSQAKPENSRLTFSPSTDKQYSEKDS. Thr-114 bears the Phosphothreonine mark. A Phosphoserine modification is found at Ser-366. A coiled-coil region spans residues 462–555; sequence LEHQKAIMAQ…EQRIRELAQK (94 aa). Disordered regions lie at residues 470–491, 577–602, and 738–794; these read AQVE…KEEQ, TISS…DTGV, and ENLS…RTQQ. The segment covering 473–491 has biased composition (basic and acidic residues); it reads EENRRKKRLEEEQRKKEEQ. Positions 567–935 are mediates localization to cilia, centrosomes and spindle microtubules and the interaction with PCM1, CEP290, CEP104 and CSPP1; sequence GAQVDYKAFT…NQEDNFSSSF (369 aa). Polar residues predominate over residues 590–602; sequence DTSTASPKKDTGV. Ser-595 carries the post-translational modification Phosphoserine. The span at 752–782 shows a compositional bias: basic and acidic residues; the sequence is SHRETESESRLHLIKKVEEPLKTPSVSKERF. Residues 783–794 are compositionally biased toward polar residues; it reads QTSPAVKNRTQQ.

Homodimer; disulfide-linked. Interacts with CEP290. Interacts with PCM1. Interacts with ARMC9, TOGARAM1, CSPP1 and CEP104. Interacts with CDK5RAP2, CEP152, CEP192, TBG1 and PRC1. Widely expressed. Expressed in retina by rod photoreceptors but also detected in outer plexiform and ganglion cell layers (at protein level).

Its subcellular location is the cytoplasm. It is found in the cytoskeleton. It localises to the microtubule organizing center. The protein resides in the centrosome. The protein localises to the centriolar satellite. Its subcellular location is the cell projection. It is found in the cilium. It localises to the cilium basal body. The protein resides in the cilium axoneme. The protein localises to the photoreceptor inner segment. Its subcellular location is the photoreceptor outer segment. Its function is as follows. Microtubule-binding protein required for ciliogenesis. May function in ciliogenesis by mediating the transport of proteins like BBS4 to the cilium, but also through the organization of the centriolar satellites. Required for the assembly of signaling-competent cilia with proper structure and length. Mediates this function in part by regulating transition zone assembly and basal body recruitment of the IFT-B complex. Cooperates with the ciliopathy proteins CSPP1 and CEP104 during cilium length regulation. Plays two important roles during cell division. First, is required for mitotic progression via regulation of spindle assembly, organization and orientation, levels of spindle microtubules (MTs), kinetochore-fiber integrity, and chromosome alignment. Second, functions during cytokinesis in part by regulating assembly and organization of central spindle and midbody MTs. Plays a role in retina morphogenesis and/or homeostasis. The protein is Coiled-coil domain-containing protein 66 of Mus musculus (Mouse).